A 931-amino-acid chain; its full sequence is Bifunctional glutamine synthetase adenylyltransferase/adenylyl-removing enzyme (931 aa).

The interval 1-434 (MTLAPADLPA…STEFAALLAP (434 aa)) is adenylyl removase. Residues 441-931 (PDALANYWRS…ACIAAELPFA (491 aa)) are adenylyl transferase.

The protein belongs to the GlnE family. Mg(2+) is required as a cofactor.

The catalysed reaction is [glutamine synthetase]-O(4)-(5'-adenylyl)-L-tyrosine + phosphate = [glutamine synthetase]-L-tyrosine + ADP. It carries out the reaction [glutamine synthetase]-L-tyrosine + ATP = [glutamine synthetase]-O(4)-(5'-adenylyl)-L-tyrosine + diphosphate. Involved in the regulation of glutamine synthetase GlnA, a key enzyme in the process to assimilate ammonia. When cellular nitrogen levels are high, the C-terminal adenylyl transferase (AT) inactivates GlnA by covalent transfer of an adenylyl group from ATP to specific tyrosine residue of GlnA, thus reducing its activity. Conversely, when nitrogen levels are low, the N-terminal adenylyl removase (AR) activates GlnA by removing the adenylyl group by phosphorolysis, increasing its activity. The regulatory region of GlnE binds the signal transduction protein PII (GlnB) which indicates the nitrogen status of the cell. This chain is Bifunctional glutamine synthetase adenylyltransferase/adenylyl-removing enzyme, found in Stenotrophomonas maltophilia (strain R551-3).